The sequence spans 368 residues: UDP-N-acetylglucosamine--N-acetylmuramyl-(pentapeptide) pyrophosphoryl-undecaprenol N-acetylglucosamine transferase (368 aa).

Residues 10–12 (TGG), asparagine 126, serine 200, isoleucine 255, and glutamine 300 contribute to the UDP-N-acetyl-alpha-D-glucosamine site.

The protein belongs to the glycosyltransferase 28 family. MurG subfamily.

It is found in the cell membrane. The enzyme catalyses Mur2Ac(oyl-L-Ala-gamma-D-Glu-L-Lys-D-Ala-D-Ala)-di-trans,octa-cis-undecaprenyl diphosphate + UDP-N-acetyl-alpha-D-glucosamine = beta-D-GlcNAc-(1-&gt;4)-Mur2Ac(oyl-L-Ala-gamma-D-Glu-L-Lys-D-Ala-D-Ala)-di-trans,octa-cis-undecaprenyl diphosphate + UDP + H(+). It functions in the pathway cell wall biogenesis; peptidoglycan biosynthesis. In terms of biological role, cell wall formation. Catalyzes the transfer of a GlcNAc subunit on undecaprenyl-pyrophosphoryl-MurNAc-pentapeptide (lipid intermediate I) to form undecaprenyl-pyrophosphoryl-MurNAc-(pentapeptide)GlcNAc (lipid intermediate II). This Lactobacillus acidophilus (strain ATCC 700396 / NCK56 / N2 / NCFM) protein is UDP-N-acetylglucosamine--N-acetylmuramyl-(pentapeptide) pyrophosphoryl-undecaprenol N-acetylglucosamine transferase.